Consider the following 182-residue polypeptide: Prorelaxin (182 aa).

The signal sequence occupies residues 1–24 (MPRLFSYLLGVWLLLSQLPREIPG). Q25 bears the Pyrrolidone carboxylic acid mark. Intrachain disulfides connect C34-C169, C46-C182, and C168-C173. Positions 57-154 (SLEEPQLETG…LKNLGLDKHS (98 aa)) are cleaved as a propeptide — connecting peptide. A propeptide spanning residues 159–160 (LF) is cleaved from the precursor.

This sequence belongs to the insulin family. In terms of assembly, heterodimer of a B chain and an A chain linked by two disulfide bonds.

Its subcellular location is the secreted. Relaxin is an ovarian hormone that acts with estrogen to produce dilatation of the birth canal in many mammals. In Sus scrofa (Pig), this protein is Prorelaxin (RLN).